A 287-amino-acid chain; its full sequence is MLYLAKMRNAEGELTENEQKIASFLLAHVSELKTVSSRNLAKQLEVSQSSIVKFAQKLGAKGFTELRMALIEEYSVNREKKHDTALHLHSTITSEDSLEVIARKLNREKMFALEETCSLMDFDRLKQVINLISKARLIQITGVGGSALVGRDLSFKLMKIGYRVACEVDTHVQATIAQALQEGDVQIAISYSGSKKEIVLCAEAARKQGATVIAITSLTDSPLRRLADYTLDTVSGETEWRSSSMSTRTAQNSVTDLLFVGMVQLNDVESLRMIERSSELINLLGRS.

Positions 1 to 77 (MLYLAKMRNA…MALIEEYSVN (77 aa)) constitute an HTH rpiR-type domain. Residues 37–56 (SRNLAKQLEVSQSSIVKFAQ) constitute a DNA-binding region (H-T-H motif). In terms of domain architecture, SIS spans 128–268 (VINLISKARL…FVGMVQLNDV (141 aa)).

Homotetramer.

Its pathway is amino-sugar metabolism; N-acetylmuramate degradation [regulation]. Functionally, represses the expression of the murPQ operon involved in the uptake and degradation of N-acetylmuramic acid (MurNAc). Binds to two adjacent inverted repeats within the operator region. MurNAc 6-phosphate, the substrate of MurQ, is the specific inducer that weakens binding of MurR to the operator. This chain is HTH-type transcriptional regulator MurR, found in Citrobacter koseri (strain ATCC BAA-895 / CDC 4225-83 / SGSC4696).